A 475-amino-acid polypeptide reads, in one-letter code: Amino acid permease 8 (475 aa).

A disordered region spans residues 1 to 22 (MDAYNNPSAVESGDAAVKSVDD). Residues 1 to 31 (MDAYNNPSAVESGDAAVKSVDDDGREKRTGT) lie on the Cytoplasmic side of the membrane. 2 helical membrane passes run 32 to 52 (FWTA…LSLA) and 53 to 73 (WAIA…FAII). Over 74 to 120 (TYYTSTLLADCYRSPDSITGTRNYNYMGVVRSYLGGKKVQLCGVAQY) the chain is Cytoplasmic. Residues 121-141 (VNLVGVTIGYTITASISLVAI) traverse the membrane as a helical segment. Residues 142-157 (GKSNCYHDKGHKAKCS) are Extracellular-facing. The helical transmembrane segment at 158–178 (VSNYPYMAAFGIVQIILSQLP) threads the bilayer. The Cytoplasmic segment spans residues 179–185 (NFHKLSF). The chain crosses the membrane as a helical span at residues 186 to 206 (LSIIAAVMSFSYASIGIGLAI). Over 207-236 (ATVASGKIGKTELTGTVIGVDVTASEKVWK) the chain is Extracellular. The chain crosses the membrane as a helical span at residues 237–257 (LFQAIGDIAFSYAFTTILIEI). Residues 258–276 (QDTLRSSPPENKVMKRASL) lie on the Cytoplasmic side of the membrane. The chain crosses the membrane as a helical span at residues 277-297 (VGVSTTTVFYILCGCIGYAAF). The Extracellular portion of the chain corresponds to 298 to 314 (GNQAPGDFLTDFGFYEP). A helical membrane pass occupies residues 315 to 335 (YWLIDFANACIALHLIGAYQV). The Cytoplasmic segment spans residues 336–378 (YAQPFFQFVEENCNKKWPQSNFINKEYSSKVPLLGKCRVNLFR). Residues 379-398 (LVWRTCYVVLTTFVAMIFPF) form a helical membrane-spanning segment. The Extracellular segment spans residues 399-401 (FNA). Residues 402–424 (ILGLLGAFAFWPLTVYFPVAMHI) traverse the membrane as a helical segment. Topologically, residues 425–441 (AQAKVKKYSRRWLALNL) are cytoplasmic. Residues 442-462 (LVLVCLIVSALAAVGSIIGLI) form a helical membrane-spanning segment. Over 463–475 (NSVKSYKPFKNLD) the chain is Extracellular.

Belongs to the amino acid/polyamine transporter 2 family. Amino acid/auxin permease (AAAP) (TC 2.A.18.2) subfamily. Expressed in flower buds, siliques, developing seeds and funiculi.

It is found in the cell membrane. Its function is as follows. Amino acid-proton symporter. Stereospecific transporter with a broad specificity for glutamate, aspartate and neutral and acidic amino acids. The chain is Amino acid permease 8 (AAP8) from Arabidopsis thaliana (Mouse-ear cress).